A 701-amino-acid polypeptide reads, in one-letter code: MESKIYKMELAGRELSFEIGKYALLANGAVLARYGDTAVLVTACASEKPREGINFFPLTVDYEERLYSVGKIPGGFIKREGKPSEKAILSARLIDRPIRPLFPKDFYHDVSVIATVLSVDPDNPPDVLAMLGSSVALSISDIPFEGPTGSVLVGYVDGKIVINPTAKEREVSKLHLVVSGTKDKVMMIEAGAQEIPEDIMLEAIMTAQEEIKKIVEFIEGIVKEVGKPKMQYEKRVVPEEIKQKVRELAYEKAYQYVQIPDKIERDKKLDELKEEVLKAFEGETEDTLLLVDDALYNLEKEIVRKMIAEEGKRPDGRKFDEIRPLYAEVGILPRTHGSALFKRGYTQVLTVATLGTKGEMQFLDGLEEEEAKRYMHHYNFPPYSTGESKPVRGPGRREIGHGALAERALEPVIPSEDEFPYTIRLVSEVLTSNGSTSQASVCGSTLALMDAGVPIKAPVAGISIGLITKEDGSFITLTDIQGIEDFFGDMDFKVAGTREGITAIQLDIKIHGLTKEIIEKALYQAREARLKILDFMQTVIDKPRSELSPYAPKIFKTTVDPEKIRDIIGPGGKMINKIIAKTNVKIDIEPDGRIFVAAPDDISGNRAISMIEGIGREIEVGQFFLGKVTRTASYGAFVEIYPGKEGLVHISQLDNKKLKSVDEVVKVGDLVLVKVIGIDRLGRIALSRKEALNVTYSRKAK.

Asp-485 and Asp-491 together coordinate Mg(2+). Residues Pro-552–Ile-611 enclose the KH domain. Residues Gly-621 to Lys-689 form the S1 motif domain.

Belongs to the polyribonucleotide nucleotidyltransferase family. The cofactor is Mg(2+).

It localises to the cytoplasm. It catalyses the reaction RNA(n+1) + phosphate = RNA(n) + a ribonucleoside 5'-diphosphate. Its function is as follows. Involved in mRNA degradation. Catalyzes the phosphorolysis of single-stranded polyribonucleotides processively in the 3'- to 5'-direction. The chain is Polyribonucleotide nucleotidyltransferase from Caldicellulosiruptor saccharolyticus (strain ATCC 43494 / DSM 8903 / Tp8T 6331).